Reading from the N-terminus, the 409-residue chain is Nucleoprotein (409 aa).

Disordered stretches follow at residues 1–32 (MASG…SSGN), 44–69 (LNSP…QQHG), 121–145 (ADVK…LRFS), 164–195 (RSGR…SEGD), and 238–259 (VDQV…DKMN). A compositionally biased stretch (low complexity) spans 15 to 31 (PVIKLGGPKPPKVGSSG). An RNA-binding region spans residues 29–160 (SSGNASWFQA…GNFRWDFIPL (132 aa)). The CoV N NTD domain occupies 31-156 (GNASWFQAIK…GGPDGNFRWD (126 aa)). The span at 164–179 (RSGRSTAASSAASSRA) shows a compositional bias: low complexity. Basic and acidic residues-rich tracts occupy residues 180–192 (PSRD…RSGS) and 247–259 (KGKE…DKMN). S190 and S192 each carry phosphoserine; by host. The region spanning 215–331 (TKAKADEMAH…QCVDGVGTRP (117 aa)) is the CoV N CTD domain. The tract at residues 226 to 333 (RYCKRTIPPG…VDGVGTRPKD (108 aa)) is dimerization. A disulfide bridge connects residues C320 and C323. The disordered stretch occupies residues 326–409 (GVGTRPKDDE…GDSALGENEL (84 aa)). The segment covering 341–358 (RSSSRPATRTSSPALRQQ) has biased composition (low complexity). A compositionally biased stretch (basic and acidic residues) spans 368 to 384 (KQDDEVDKALTSDEERN). At T378 the chain carries Phosphothreonine; by host. The residue at position 379 (S379) is a Phosphoserine; by host.

This sequence belongs to the gammacoronavirus nucleocapsid protein family. Homooligomer. Both monomeric and oligomeric forms interact with RNA. Interacts with protein M. Interacts with NSP3; this interaction serves to tether the genome to the newly translated replicase-transcriptase complex at a very early stage of infection. In terms of processing, ADP-ribosylated. The ADP-ribosylation is retained in the virion during infection. Phosphorylated on serine and threonine residues.

The protein resides in the virion. It is found in the host endoplasmic reticulum-Golgi intermediate compartment. Its subcellular location is the host Golgi apparatus. In terms of biological role, packages the positive strand viral genome RNA into a helical ribonucleocapsid (RNP) and plays a fundamental role during virion assembly through its interactions with the viral genome and membrane protein M. Plays an important role in enhancing the efficiency of subgenomic viral RNA transcription as well as viral replication. The sequence is that of Nucleoprotein from Gallus gallus (Chicken).